The following is a 290-amino-acid chain: 4-diphosphocytidyl-2-C-methyl-D-erythritol kinase (290 aa).

K14 is a catalytic residue. ATP is bound at residue 103–113 (PMGGGLGGGSS). The active site involves D145.

The protein belongs to the GHMP kinase family. IspE subfamily. In terms of assembly, homodimer.

The catalysed reaction is 4-CDP-2-C-methyl-D-erythritol + ATP = 4-CDP-2-C-methyl-D-erythritol 2-phosphate + ADP + H(+). It functions in the pathway isoprenoid biosynthesis; isopentenyl diphosphate biosynthesis via DXP pathway; isopentenyl diphosphate from 1-deoxy-D-xylulose 5-phosphate: step 3/6. In terms of biological role, catalyzes the phosphorylation of the position 2 hydroxy group of 4-diphosphocytidyl-2C-methyl-D-erythritol. The chain is 4-diphosphocytidyl-2-C-methyl-D-erythritol kinase from Pectobacterium atrosepticum (strain SCRI 1043 / ATCC BAA-672) (Erwinia carotovora subsp. atroseptica).